Reading from the N-terminus, the 350-residue chain is Biotin synthase (350 aa).

The region spanning Asn-38 to Glu-256 is the Radical SAM core domain. [4Fe-4S] cluster is bound by residues Cys-53, Cys-57, and Cys-60. Positions 97, 128, 188, and 260 each coordinate [2Fe-2S] cluster.

The protein belongs to the radical SAM superfamily. Biotin synthase family. Homodimer. Requires [4Fe-4S] cluster as cofactor. [2Fe-2S] cluster serves as cofactor.

It catalyses the reaction (4R,5S)-dethiobiotin + (sulfur carrier)-SH + 2 reduced [2Fe-2S]-[ferredoxin] + 2 S-adenosyl-L-methionine = (sulfur carrier)-H + biotin + 2 5'-deoxyadenosine + 2 L-methionine + 2 oxidized [2Fe-2S]-[ferredoxin]. It participates in cofactor biosynthesis; biotin biosynthesis; biotin from 7,8-diaminononanoate: step 2/2. In terms of biological role, catalyzes the conversion of dethiobiotin (DTB) to biotin by the insertion of a sulfur atom into dethiobiotin via a radical-based mechanism. This is Biotin synthase from Aliivibrio salmonicida (strain LFI1238) (Vibrio salmonicida (strain LFI1238)).